Consider the following 78-residue polypeptide: Small ribosomal subunit protein bS16c (78 aa).

This sequence belongs to the bacterial ribosomal protein bS16 family.

It localises to the plastid. Its subcellular location is the chloroplast. The protein is Small ribosomal subunit protein bS16c of Panax ginseng (Korean ginseng).